A 78-amino-acid chain; its full sequence is Large ribosomal subunit protein bL28 (78 aa).

The segment at 1–20 is disordered; that stretch reads MSRVCQVTGKGPVTGNNISH.

This sequence belongs to the bacterial ribosomal protein bL28 family.

The polypeptide is Large ribosomal subunit protein bL28 (Azotobacter vinelandii (strain DJ / ATCC BAA-1303)).